The chain runs to 73 residues: Translation initiation factor IF-1 (73 aa).

The S1-like domain occupies 1–73 (MPKKEGVIEI…TRGRIVYRYK (73 aa)).

The protein belongs to the IF-1 family. As to quaternary structure, component of the 30S ribosomal translation pre-initiation complex which assembles on the 30S ribosome in the order IF-2 and IF-3, IF-1 and N-formylmethionyl-tRNA(fMet); mRNA recruitment can occur at any time during PIC assembly.

Its subcellular location is the cytoplasm. One of the essential components for the initiation of protein synthesis. Stabilizes the binding of IF-2 and IF-3 on the 30S subunit to which N-formylmethionyl-tRNA(fMet) subsequently binds. Helps modulate mRNA selection, yielding the 30S pre-initiation complex (PIC). Upon addition of the 50S ribosomal subunit IF-1, IF-2 and IF-3 are released leaving the mature 70S translation initiation complex. The protein is Translation initiation factor IF-1 of Nocardioides sp. (strain ATCC BAA-499 / JS614).